The chain runs to 140 residues: Anti-sigma F factor (140 aa).

It belongs to the anti-sigma-factor family.

The enzyme catalyses L-seryl-[protein] + ATP = O-phospho-L-seryl-[protein] + ADP + H(+). It carries out the reaction L-threonyl-[protein] + ATP = O-phospho-L-threonyl-[protein] + ADP + H(+). Binds to sigma F and blocks its ability to form an RNA polymerase holoenzyme (E-sigma F). Phosphorylates SpoIIAA on a serine residue. This phosphorylation may enable SpoIIAA to act as an anti-anti-sigma factor that counteracts SpoIIAB and thus releases sigma F from inhibition. The sequence is that of Anti-sigma F factor from Clostridium perfringens (strain ATCC 13124 / DSM 756 / JCM 1290 / NCIMB 6125 / NCTC 8237 / Type A).